The sequence spans 518 residues: DNA-(apurinic or apyrimidinic site) endonuclease 2 (518 aa).

The Mg(2+) site is built by N8 and E48. Y156 is a catalytic residue. 4 residues coordinate Mg(2+): D197, N199, D303, and H304. D197 functions as the Proton donor/acceptor in the catalytic mechanism. H304 functions as the Proton acceptor in the catalytic mechanism. Over residues 355–405 (STLQHNNQTRVQTCQNKAQVRSTRPQPSQVGSSRGQKNLKSYFQPSPSCPQ) the composition is skewed to polar residues. Positions 355–407 (STLQHNNQTRVQTCQNKAQVRSTRPQPSQVGSSRGQKNLKSYFQPSPSCPQAS) are disordered. A Glycyl lysine isopeptide (Lys-Gly) (interchain with G-Cter in ubiquitin) cross-link involves residue K371. Residues 390–397 (QKNLKSYF) are required for the interaction and colocalization with PCNA in nuclear foci in presence of oxidative-induced DNA damaging agents. Positions 469, 472, 495, and 509 each coordinate Zn(2+). A GRF-type zinc finger spans residues 469-518 (CGGHREPCVMRTVKKPGPNLGRRFYMCARPRGPPTDPSSRCNFFLWSRPS).

Belongs to the DNA repair enzymes AP/ExoA family. As to quaternary structure, interacts with PCNA; this interaction is triggered by reactive oxygen species and increased by misincorporation of uracil in nuclear DNA. Mg(2+) serves as cofactor. Mn(2+) is required as a cofactor. In terms of processing, ubiquitinated by the CUL9-RBX1 complex. Ubiquitinated by MKRN3 at Lys-371 leading to proteasomal degradation. As to expression, highly expressed in brain and kidney. Weakly expressed in the fetal brain.

The protein resides in the nucleus. It localises to the cytoplasm. The protein localises to the mitochondrion. The enzyme catalyses Exonucleolytic cleavage in the 3'- to 5'-direction to yield nucleoside 5'-phosphates.. Its activity is regulated as follows. 3'-5' exonuclease activity is activated by sodium and manganese. 3'-5' exonuclease and 3'-phosphodiesterase activities are stimulated in presence of PCNA. In terms of biological role, functions as a weak apurinic/apyrimidinic (AP) endodeoxyribonuclease in the DNA base excision repair (BER) pathway of DNA lesions induced by oxidative and alkylating agents. Initiates repair of AP sites in DNA by catalyzing hydrolytic incision of the phosphodiester backbone immediately adjacent to the damage, generating a single-strand break with 5'-deoxyribose phosphate and 3'-hydroxyl ends. Also displays double-stranded DNA 3'-5' exonuclease, 3'-phosphodiesterase activities. Shows robust 3'-5' exonuclease activity on 3'-recessed heteroduplex DNA and is able to remove mismatched nucleotides preferentially. Also exhibits 3'-5' exonuclease activity on a single nucleotide gap containing heteroduplex DNA and on blunt-ended substrates. Shows fairly strong 3'-phosphodiesterase activity involved in the removal of 3'-damaged termini formed in DNA by oxidative agents. In the nucleus functions in the PCNA-dependent BER pathway. Plays a role in reversing blocked 3' DNA ends, problematic lesions that preclude DNA synthesis. Required for somatic hypermutation (SHM) and DNA cleavage step of class switch recombination (CSR) of immunoglobulin genes. Required for proper cell cycle progression during proliferation of peripheral lymphocytes. The chain is DNA-(apurinic or apyrimidinic site) endonuclease 2 (APEX2) from Homo sapiens (Human).